A 170-amino-acid chain; its full sequence is Lipoprotein signal peptidase (170 aa).

Transmembrane regions (helical) follow at residues 13–33 (IFIS…VTYV), 72–92 (LFFL…SLKE), 96–113 (VSRF…GNII), 116–136 (LFRP…IFGL), and 142–162 (FNFA…YDLF). Residues Asp-124 and Asp-146 contribute to the active site.

It belongs to the peptidase A8 family.

The protein resides in the cell inner membrane. It catalyses the reaction Release of signal peptides from bacterial membrane prolipoproteins. Hydrolyzes -Xaa-Yaa-Zaa-|-(S,diacylglyceryl)Cys-, in which Xaa is hydrophobic (preferably Leu), and Yaa (Ala or Ser) and Zaa (Gly or Ala) have small, neutral side chains.. It functions in the pathway protein modification; lipoprotein biosynthesis (signal peptide cleavage). Functionally, this protein specifically catalyzes the removal of signal peptides from prolipoproteins. This is Lipoprotein signal peptidase from Borrelia duttonii (strain Ly).